The following is a 354-amino-acid chain: Hyaluronan and proteoglycan link protein 1 (354 aa).

Positions 1–15 (MKSLLLLVLISICWA) are excised as a propeptide. N-linked (GlcNAc...) asparagine glycosylation is found at asparagine 21 and asparagine 56. The region spanning 38–152 (PHLLVEAEQA…EGLEDDTVVV (115 aa)) is the Ig-like V-type domain. Intrachain disulfides connect cysteine 61–cysteine 139, cysteine 181–cysteine 252, cysteine 205–cysteine 226, cysteine 279–cysteine 349, and cysteine 304–cysteine 325. Link domains are found at residues 159–254 (VVFP…FCFT) and 259–351 (GRFY…YCFR).

This sequence belongs to the HAPLN family. Widely expressed. Weakly expressed in the brain.

It is found in the secreted. Its subcellular location is the extracellular space. The protein localises to the extracellular matrix. Functionally, stabilizes the aggregates of proteoglycan monomers with hyaluronic acid in the extracellular cartilage matrix. The chain is Hyaluronan and proteoglycan link protein 1 (HAPLN1) from Homo sapiens (Human).